The following is a 226-amino-acid chain: Oxaloacetate tautomerase FAHD2, mitochondrial (226 aa).

The transit peptide at 1-30 directs the protein to the mitochondrion; that stretch reads MAAAAQRLLAASTKIVGVGRNFVAHAKELG. 3 residues coordinate Mg(2+): Glu-69, Glu-71, and Asp-100.

It belongs to the FAH family. Requires Mg(2+) as cofactor. It depends on Mn(2+) as a cofactor.

The protein localises to the mitochondrion. The catalysed reaction is oxaloacetate = enol-oxaloacetate. In terms of biological role, tautomerase that converts enol-oxaloacetate, a strong inhibitor of succinate dehydrogenase, to the physiological keto form of oxaloacetate. The polypeptide is Oxaloacetate tautomerase FAHD2, mitochondrial (Oryza sativa subsp. japonica (Rice)).